Reading from the N-terminus, the 302-residue chain is Lysosomal thioesterase PPT2 (302 aa).

The N-terminal stretch at 1-27 (MLGLCGQRLPAAWVLLLLPFLPLLLLA) is a signal peptide. N60 carries N-linked (GlcNAc...) asparagine glycosylation. Intrachain disulfides connect C109-C117 and C165-C176. Catalysis depends on S111, which acts as the Nucleophile. N-linked (GlcNAc...) asparagine glycosylation is found at N190 and N206. D228 is an active-site residue. N245 is a glycosylation site (N-linked (GlcNAc...) asparagine). Residues C276 and C296 are joined by a disulfide bond. H283 is a catalytic residue. N-linked (GlcNAc...) asparagine glycosylation occurs at N289.

The protein belongs to the palmitoyl-protein thioesterase family. In terms of tissue distribution, broadly expressed, with highest levels in skeletal muscle.

It localises to the lysosome. It catalyses the reaction hexadecanoyl-CoA + H2O = hexadecanoate + CoA + H(+). It carries out the reaction S-hexadecanoyl-N-acetylcysteamine + H2O = N-acetylcysteamine + hexadecanoate + H(+). Its function is as follows. Catalyzes the cleavage of thioester bonds from S-palmitoyl-CoA or S-palmitoyl-N-acetylcysteamine (unbranched structures) but does not have activity against palmitoylcysteine or palmitoylated proteins, branched structures or bulky head groups. Conversely, hydrolyzes both long and short chain fatty acyl-CoA substrate. Functionally, catalytically inactive due to lack of active site His-283. The protein is Lysosomal thioesterase PPT2 of Homo sapiens (Human).